The chain runs to 100 residues: Urease subunit gamma (100 aa).

The protein belongs to the urease gamma subunit family. Heterotrimer of UreA (gamma), UreB (beta) and UreC (alpha) subunits. Three heterotrimers associate to form the active enzyme.

It localises to the cytoplasm. It carries out the reaction urea + 2 H2O + H(+) = hydrogencarbonate + 2 NH4(+). It functions in the pathway nitrogen metabolism; urea degradation; CO(2) and NH(3) from urea (urease route): step 1/1. The chain is Urease subunit gamma from Staphylococcus epidermidis (strain ATCC 35984 / DSM 28319 / BCRC 17069 / CCUG 31568 / BM 3577 / RP62A).